A 1322-amino-acid polypeptide reads, in one-letter code: Protein fantom (1322 aa).

Residues 1–22 form the signal peptide; the sequence is MVSARYPIEKWSRPQLEDHFHN. Positions 15-89 form a coiled coil; sequence QLEDHFHNVV…MKLKAAKQQL (75 aa). Positions 108-119 are enriched in polar residues; sequence RSTFRQPPSTFR. Disordered stretches follow at residues 108-151, 189-275, and 392-418; these read RSTF…GEKL, KSSV…PDQT, and RIEE…SQSE. A compositionally biased stretch (low complexity) spans 195-217; it reads SSPPTRLSTSSSSKSSSSNNNND. A compositionally biased stretch (acidic residues) spans 224-234; the sequence is ELEEMSEMSDD. Residues 274 to 362 are a coiled coil; that stretch reads QTEKVLLDKL…EDQKKFEAMR (89 aa). The stretch at 456–538 forms a coiled coil; that stretch reads ASENSLARWQ…FMLEEQIRTI (83 aa). Disordered stretches follow at residues 891 to 1094 and 1121 to 1149; these read AELH…KPRN and TDPL…PVPL. Positions 918-927 are enriched in low complexity; it reads TDSSDTSFSH. The span at 956-975 shows a compositional bias: acidic residues; it reads SDGEEEADRIVFDDDDDEIE. The segment covering 984 to 996 has biased composition (basic and acidic residues); it reads RDPEPLEVPERQV. Residues 1015 to 1029 are compositionally biased toward polar residues; the sequence is NGTNESKESTPVTQR. Residues 1042–1067 are compositionally biased toward acidic residues; it reads PELEPESGPEPEPVVESEPNEVAETE. Residues 1068–1080 are compositionally biased toward basic and acidic residues; that stretch reads EDRKRELKTEELK. The span at 1127–1139 shows a compositional bias: low complexity; sequence SVPPSESSSTSSP.

Belongs to the RPGRIP1 family. As to expression, expressed at the transition zone at the base of cilia. Expressed in ciliated sensory neurons, including the amphid neurons in the head.

Its subcellular location is the cell projection. The protein resides in the cilium. Functionally, thought to have an important role in cilia formation and cilia-mediated chemosensation. Involved in the docking of other MKS/MKSR proteins localized to the transition zone of the cilia. The protein is Protein fantom (mks-5) of Caenorhabditis elegans.